An 84-amino-acid chain; its full sequence is Small ribosomal subunit protein eS27 (84 aa).

A compositionally biased stretch (basic and acidic residues) spans 1 to 16 (MPLAKDLLHPTPEEEK). The segment at 1–23 (MPLAKDLLHPTPEEEKRKHKKKR) is disordered. The C4-type zinc-finger motif lies at 37 to 59 (CPGCYKITTVFSHAQTVVLCVGC).

It belongs to the eukaryotic ribosomal protein eS27 family. In terms of assembly, component of the small ribosomal subunit. Part of the small subunit (SSU) processome, composed of more than 70 proteins and the RNA chaperone small nucleolar RNA (snoRNA) U3. Requires Zn(2+) as cofactor.

Its subcellular location is the cytoplasm. It is found in the nucleus. It localises to the nucleolus. Its function is as follows. Component of the small ribosomal subunit. The ribosome is a large ribonucleoprotein complex responsible for the synthesis of proteins in the cell. Required for proper rRNA processing and maturation of 18S rRNAs. Part of the small subunit (SSU) processome, first precursor of the small eukaryotic ribosomal subunit. During the assembly of the SSU processome in the nucleolus, many ribosome biogenesis factors, an RNA chaperone and ribosomal proteins associate with the nascent pre-rRNA and work in concert to generate RNA folding, modifications, rearrangements and cleavage as well as targeted degradation of pre-ribosomal RNA by the RNA exosome. This is Small ribosomal subunit protein eS27 (rps27) from Xenopus laevis (African clawed frog).